A 122-amino-acid chain; its full sequence is Large ribosomal subunit protein bL12 (122 aa).

It belongs to the bacterial ribosomal protein bL12 family. As to quaternary structure, homodimer. Part of the ribosomal stalk of the 50S ribosomal subunit. Forms a multimeric L10(L12)X complex, where L10 forms an elongated spine to which 2 to 4 L12 dimers bind in a sequential fashion. Binds GTP-bound translation factors.

Its function is as follows. Forms part of the ribosomal stalk which helps the ribosome interact with GTP-bound translation factors. Is thus essential for accurate translation. The protein is Large ribosomal subunit protein bL12 of Shewanella putrefaciens (strain CN-32 / ATCC BAA-453).